The primary structure comprises 478 residues: Glutamate--tRNA ligase (478 aa).

The 'HIGH' region motif lies at 8 to 18 (PSPTGYLHLGN). A 'KMSKS' region motif is present at residues 248–252 (KLSKR). Residue lysine 251 coordinates ATP.

Belongs to the class-I aminoacyl-tRNA synthetase family. Glutamate--tRNA ligase type 1 subfamily. Monomer.

It is found in the cytoplasm. It carries out the reaction tRNA(Glu) + L-glutamate + ATP = L-glutamyl-tRNA(Glu) + AMP + diphosphate. Its function is as follows. Catalyzes the attachment of glutamate to tRNA(Glu) in a two-step reaction: glutamate is first activated by ATP to form Glu-AMP and then transferred to the acceptor end of tRNA(Glu). The protein is Glutamate--tRNA ligase of Sulfurihydrogenibium sp. (strain YO3AOP1).